Consider the following 321-residue polypeptide: Histidine N-alpha-methyltransferase (321 aa).

Tyr-56 serves as a coordination point for L-histidine. S-adenosyl-L-methionine is bound by residues Gly-86, Lys-92, Asp-113, and 141–142; that span reads DF. L-histidine contacts are provided by residues Asn-166, Tyr-206, and 282–284; that span reads EVS.

It belongs to the methyltransferase superfamily. EgtD family. Monomer.

It catalyses the reaction L-histidine + 3 S-adenosyl-L-methionine = hercynine + 3 S-adenosyl-L-homocysteine + 3 H(+). The protein operates within amino-acid biosynthesis; ergothioneine biosynthesis. Catalyzes the SAM-dependent triple methylation of the alpha-amino group of histidine to form hercynine, a step in the biosynthesis pathway of ergothioneine (ERG). ERG is one of the major redox buffers which protects bacteria against redox stressors and antibiotics; loss of ERG or mycothiol (MSH, the other major redox buffer in this bacteria) leads to respiratory alterations and bioenergetic deficiencies that negatively impact virulence. The sequence is that of Histidine N-alpha-methyltransferase (egtD) from Mycobacterium tuberculosis (strain CDC 1551 / Oshkosh).